The sequence spans 471 residues: tRNA-2-methylthio-N(6)-dimethylallyladenosine synthase (471 aa).

One can recognise an MTTase N-terminal domain in the interval 29–146 (KKFHIKTYGC…LPELIAKVNR (118 aa)). The [4Fe-4S] cluster site is built by Cys38, Cys74, Cys109, Cys187, Cys191, and Cys194. The 233-residue stretch at 173 to 405 (RVPQSSAFLS…QQLLKEKQLE (233 aa)) folds into the Radical SAM core domain. One can recognise a TRAM domain in the interval 408 to 467 (KKMIGKTVTVLFDKKHPDKISGRTEYMQQVFSDDSNLLDKIVTMRVEDASTFTLKCTAED).

Belongs to the methylthiotransferase family. MiaB subfamily. In terms of assembly, monomer. It depends on [4Fe-4S] cluster as a cofactor.

Its subcellular location is the cytoplasm. The enzyme catalyses N(6)-dimethylallyladenosine(37) in tRNA + (sulfur carrier)-SH + AH2 + 2 S-adenosyl-L-methionine = 2-methylsulfanyl-N(6)-dimethylallyladenosine(37) in tRNA + (sulfur carrier)-H + 5'-deoxyadenosine + L-methionine + A + S-adenosyl-L-homocysteine + 2 H(+). Its function is as follows. Catalyzes the methylthiolation of N6-(dimethylallyl)adenosine (i(6)A), leading to the formation of 2-methylthio-N6-(dimethylallyl)adenosine (ms(2)i(6)A) at position 37 in tRNAs that read codons beginning with uridine. The chain is tRNA-2-methylthio-N(6)-dimethylallyladenosine synthase from Neorickettsia sennetsu (strain ATCC VR-367 / Miyayama) (Ehrlichia sennetsu).